The primary structure comprises 1023 residues: MAGNDCGALLDEELSSFFLNYLADTQGGGSGEEQLYADFPELDLSQLDASDFDSATCFGELQWCPENSETEPNQYSPDDSELFQIDSENEALLAELTKTLDDIPEDDVGLAAFPALDGGDALSCTSASPAPSSAPPSPAPEKPSAPAPEVDELSLLQKLLLATSYPTSSSDTQKEGTAWRQAGLRSKSQRPCVKADSTQDKKAPMMQSQSRSCTELHKHLTSAQCCLQDRGLQPPCLQSPRLPAKEDKEPGEDCPSPQPAPASPRDSLALGRADPGAPVSQEDMQAMVQLIRYMHTYCLPQRKLPPQTPEPLPKACSNPSQQVRSRPWSRHHSKASWAEFSILRELLAQDVLCDVSKPYRLATPVYASLTPRSRPRPPKDSQASPGRPSSVEEVRIAASPKSTGPRPSLRPLRLEVKREVRRPARLQQQEEEDEEEEEEEEEEEKEEEEEWGRKRPGRGLPWTKLGRKLESSVCPVRRSRRLNPELGPWLTFADEPLVPSEPQGALPSLCLAPKAYDVERELGSPTDEDSGQDQQLLRGPQIPALESPCESGCGDMDEDPSCPQLPPRDSPRCLMLALSQSDPTFGKKSFEQTLTVELCGTAGLTPPTTPPYKPTEEDPFKPDIKHSLGKEIALSLPSPEGLSLKATPGAAHKLPKKHPERSELLSHLRHATAQPASQAGQKRPFSCSFGDHDYCQVLRPEGVLQRKVLRSWEPSGVHLEDWPQQGAPWAEAQAPGREEDRSCDAGAPPKDSTLLRDHEIRASLTKHFGLLETALEEEDLASCKSPEYDTVFEDSSSSSGESSFLPEEEEEEGEEEEEDDEEEDSGVSPTCSDHCPYQSPPSKANRQLCSRSRSSSGSSPCHSWSPATRRNFRCESRGPCSDRTPSIRHARKRREKAIGEGRVVYIQNLSSDMSSRELKRRFEVFGEIEECEVLTRNRRGEKYGFITYRCSEHAALSLTKGAALRKRNEPSFQLSYGGLRHFCWPRYTDYDSNSEEALPASGKSKYEAMDFDSLLKEAQQSLH.

Positions 1-91 are abolishes DNA transcriptional activity when missing; it reads MAGNDCGALL…LFQIDSENEA (91 aa). The segment at 122 to 148 is disordered; it reads LSCTSASPAPSSAPPSPAPEKPSAPAP. A compositionally biased stretch (pro residues) spans 132–146; it reads SSAPPSPAPEKPSAP. The LXXLL motif 1 motif lies at 156-160; the sequence is LQKLL. Disordered stretches follow at residues 165–210, 237–278, and 302–331; these read YPTS…QSQS, LQSP…PGAP, and RKLP…WSRH. An LXXLL motif 2 motif is present at residues 343–347; it reads LRELL. Disordered regions lie at residues 369–463, 520–567, 601–623, and 636–683; these read LTPR…LPWT, RELG…QLPP, TAGL…FKPD, and LPSP…GQKR. S384 carries the post-translational modification Phosphoserine. Basic and acidic residues predominate over residues 412–422; the sequence is LRLEVKREVRR. A compositionally biased stretch (acidic residues) spans 429-450; sequence QEEEDEEEEEEEEEEEKEEEEE. S524 is modified (phosphoserine). Residues 614–623 show a composition bias toward basic and acidic residues; that stretch reads PTEEDPFKPD. S638 is modified (phosphoserine). Positions 691 to 694 match the HCFC1-binding-motif (HBM) motif; that stretch reads DHDY. Disordered stretches follow at residues 717 to 758 and 779 to 867; these read VHLE…LRDH and DLAS…WSPA. Residues 793 to 805 are compositionally biased toward low complexity; the sequence is EDSSSSSGESSFL. Positions 806-825 are enriched in acidic residues; that stretch reads PEEEEEEGEEEEEDDEEEDS. Residues 849–866 show a composition bias toward low complexity; that stretch reads CSRSRSSSGSSPCHSWSP. One can recognise an RRM domain in the interval 902-976; the sequence is RVVYIQNLSS…RNEPSFQLSY (75 aa).

Interacts with hepatocyte nuclear factor 4-alpha/HNF4A, Sterol regulatory binding transcription factor 1/SREBF1, PPAR-alpha/PPARA, thyroid hormone receptor beta/THRB and host cell factor/HCFC1. Interacts with estrogen-related receptor gamma/ESRRG and alpha/ESRRA. Interacts with PRDM16. Interacts with estrogen receptor alpha/ESR1. As to expression, ubiquitous with higher expression in heart, brain and skeletal muscle.

It localises to the nucleus. Plays a role of stimulator of transcription factors and nuclear receptors activities. Activates transcriptional activity of estrogen receptor alpha, nuclear respiratory factor 1 (NRF1) and glucocorticoid receptor in the presence of glucocorticoids. May play a role in constitutive non-adrenergic-mediated mitochondrial biogenesis as suggested by increased basal oxygen consumption and mitochondrial number when overexpressed. May be involved in fat oxidation and non-oxidative glucose metabolism and in the regulation of energy expenditure. Induces the expression of PERM1 in the skeletal muscle in an ESRRA-dependent manner. The sequence is that of Peroxisome proliferator-activated receptor gamma coactivator 1-beta (PPARGC1B) from Homo sapiens (Human).